A 394-amino-acid polypeptide reads, in one-letter code: S-adenosylmethionine synthase 2 (394 aa).

E11 is a Mg(2+) binding site. H17 is a binding site for ATP. E45 contacts K(+). L-methionine contacts are provided by E58 and Q101. ATP-binding positions include 169-171 (DGK), 237-240 (SGRF), D248, 254-255 (RK), A271, K275, and K279. An L-methionine-binding site is contributed by D248. An L-methionine-binding site is contributed by K279.

It belongs to the AdoMet synthase family. In terms of assembly, homotetramer. Requires Mn(2+) as cofactor. The cofactor is Mg(2+). Co(2+) is required as a cofactor. It depends on K(+) as a cofactor.

Its subcellular location is the cytoplasm. The enzyme catalyses L-methionine + ATP + H2O = S-adenosyl-L-methionine + phosphate + diphosphate. Its pathway is amino-acid biosynthesis; S-adenosyl-L-methionine biosynthesis; S-adenosyl-L-methionine from L-methionine: step 1/1. Functionally, catalyzes the formation of S-adenosylmethionine from methionine and ATP. The reaction comprises two steps that are both catalyzed by the same enzyme: formation of S-adenosylmethionine (AdoMet) and triphosphate, and subsequent hydrolysis of the triphosphate. The sequence is that of S-adenosylmethionine synthase 2 (SAM2) from Hordeum vulgare (Barley).